The primary structure comprises 115 residues: MNETLLKCTTRHVRIFTARVENNDLVPDPDQLTLDLDPDNEFLWTESVIKEIQQRFAELVASHAGGELSDYNLRKIGSELEGTIRKLLQAGKLSYNPECRVLNYSMGLPRTPELL.

The protein belongs to the complex I NdhM subunit family. As to quaternary structure, NDH-1 can be composed of about 15 different subunits; different subcomplexes with different compositions have been identified which probably have different functions.

Its subcellular location is the cellular thylakoid membrane. The catalysed reaction is a plastoquinone + NADH + (n+1) H(+)(in) = a plastoquinol + NAD(+) + n H(+)(out). It carries out the reaction a plastoquinone + NADPH + (n+1) H(+)(in) = a plastoquinol + NADP(+) + n H(+)(out). In terms of biological role, NDH-1 shuttles electrons from an unknown electron donor, via FMN and iron-sulfur (Fe-S) centers, to quinones in the respiratory and/or the photosynthetic chain. The immediate electron acceptor for the enzyme in this species is believed to be plastoquinone. Couples the redox reaction to proton translocation, and thus conserves the redox energy in a proton gradient. Cyanobacterial NDH-1 also plays a role in inorganic carbon-concentration. The protein is NAD(P)H-quinone oxidoreductase subunit M of Prochlorococcus marinus (strain MIT 9303).